The following is a 624-amino-acid chain: Aliphatic sulfonate oxidoreductase, WOR-like subunit (624 aa).

Tungstopterin contacts are provided by Lys77, Ser93, Val94, Ser96, His195, Ala196, Gly198, and Tyr199. [4Fe-4S] cluster is bound by residues Asp299, Cys302, and Cys306. Tungstopterin-binding residues include Asp353, Leu357, Asp358, Gly359, Thr470, Asp490, Ile494, Cys495, and Asn496. Cys495 lines the [4Fe-4S] cluster pocket. The segment at 552–575 (KDDDNPPRFYEPLPSGPVKGKAPN) is disordered.

This sequence belongs to the AOR/FOR family. Heterodimer composed of a small WOR5-S subunit, with four [4Fe-4S] clusters, and a large WOR5-L subunit, containing the active site tungsto-bispyranopterin cofactor as well as another [4Fe-4S] cluster. [4Fe-4S] cluster is required as a cofactor. It depends on tungstopterin as a cofactor.

It is found in the cytoplasm. It carries out the reaction an aliphatic sulfonate + 4 oxidized [4Fe-4S]-[ferredoxin] + 2 H2O = 4 reduced [4Fe-4S]-[ferredoxin] + a carboxylate + sulfite + 6 H(+). The enzyme catalyses an aliphatic sulfonate + 2 oxidized [4Fe-4S]-[ferredoxin] + H2O = 2 reduced [4Fe-4S]-[ferredoxin] + an aldehyde + sulfite + 3 H(+). The catalysed reaction is 2 oxidized [4Fe-4S]-[ferredoxin] + an aldehyde + H2O = 2 reduced [4Fe-4S]-[ferredoxin] + a carboxylate + 3 H(+). It catalyses the reaction 4 oxidized [4Fe-4S]-[ferredoxin] + taurine + 2 H2O = 4 reduced [4Fe-4S]-[ferredoxin] + sulfite + glycine + 6 H(+). It carries out the reaction 2 oxidized [4Fe-4S]-[ferredoxin] + taurine + H2O = aminoacetaldehyde + 2 reduced [4Fe-4S]-[ferredoxin] + sulfite + 3 H(+). The enzyme catalyses aminoacetaldehyde + 2 oxidized [4Fe-4S]-[ferredoxin] + H2O = 2 reduced [4Fe-4S]-[ferredoxin] + glycine + 3 H(+). Its function is as follows. WOR-like catalytic subunit of an oxidoreductase that can desulfonate and oxidize aliphatic sulfonates such as taurine. The activity involves two steps: an oxidative desulfonation reaction, followed by the activation of a second water molecule and oxidation of the resulting aldehyde. May be involved in the oxidation of various aliphatic sulfonates and also phosphonates. In vitro, has a broad substrate specificity with a high affinity for several substituted and nonsubstituted aliphatic and aromatic aldehydes with various chain lengths, with methyl viologen or benzyl viologen as electron acceptor. Ferredoxin is the physiological electron acceptor. The sequence is that of Aliphatic sulfonate oxidoreductase, WOR-like subunit from Pyrococcus furiosus (strain ATCC 43587 / DSM 3638 / JCM 8422 / Vc1).